Consider the following 334-residue polypeptide: Syntaxin-18 (334 aa).

The Cytoplasmic portion of the chain corresponds to 1 to 308 (MAVDITLLFR…EDIREAIKNN (308 aa)). Disordered stretches follow at residues 29 to 50 (GGADGSRDELFRRSPRPKGDFS) and 166 to 225 (LSKL…GEDE). Basic and acidic residues-rich tracts occupy residues 33–50 (GSRDELFRRSPRPKGDFS), 166–186 (LSKLEPEPHTKRKEPASEKSS), and 193–207 (SEEKPAAEDLPEKPL). One can recognise a t-SNARE coiled-coil homology domain in the interval 242 to 304 (IGEMNSLFDE…KEGNEDIREA (63 aa)). The chain crosses the membrane as a helical; Anchor for type IV membrane protein span at residues 309-329 (AGFRVWILFFLVMCSFSLLFL). Residues 330–334 (DWYDS) are Vesicular-facing.

The protein belongs to the syntaxin family. As to quaternary structure, component of a SNARE complex consisting of STX18, USE1L, BNIP1/SEC20L, and SEC22B. RINT1/TIP20L and ZW10 are associated with the complex through interaction with BNIP1/SEC20L. Interacts directly with USE1L and BNIP1/SEC20L.

It localises to the endoplasmic reticulum membrane. The protein localises to the golgi apparatus membrane. Functionally, syntaxin that may be involved in targeting and fusion of Golgi-derived retrograde transport vesicles with the ER. The sequence is that of Syntaxin-18 (Stx18) from Rattus norvegicus (Rat).